The chain runs to 230 residues: UPF0688 protein C1orf174 homolog (230 aa).

Disordered stretches follow at residues 1 to 85 (MRSR…SLPK) and 97 to 166 (AEDS…VRAS). The segment covering 11–30 (RSSARLRARSYSSASLASAR) has biased composition (low complexity). A compositionally biased stretch (polar residues) spans 31 to 48 (DVTSSTSAKTTCLASSSH). The segment covering 49–78 (KATDRRTSKKFKYDKGHLVKAELQKLDPKS) has biased composition (basic and acidic residues). A Phosphoserine modification is found at Ser-180.

This sequence belongs to the UPF0688 family.

The protein resides in the nucleus. The sequence is that of UPF0688 protein C1orf174 homolog from Mus musculus (Mouse).